A 951-amino-acid polypeptide reads, in one-letter code: Multiple C2 and transmembrane domain-containing protein 1 (951 aa).

Disordered stretches follow at residues 29-79, 92-117, 129-198, and 210-231; these read LGVG…RWSG, SSSQ…AEQG, LPVA…QKSS, and LEPA…ALQK. Over residues 31 to 43 the composition is skewed to gly residues; the sequence is VGKGKGGGGGRAG. Positions 147–168 are enriched in low complexity; the sequence is PGGRSPDSAPSSSSASSSLSSS. Positions 174 to 184 are enriched in basic and acidic residues; it reads RGDRVRDESTR. Residues 219-228 are compositionally biased toward low complexity; it reads PARGPAEPQA. 3 consecutive C2 domains span residues 240-358, 404-521, and 555-676; these read KIST…DVTL, QTQS…KLEL, and QKER…AYVL. D275, D281, D328, D330, D336, D438, D444, D491, D493, D499, D594, D600, D646, D648, and D654 together coordinate Ca(2+). Transmembrane regions (helical) follow at residues 763-783 and 866-886; these read FVLF…LLLL and PFLS…LYFI.

It belongs to the MCTP family. Requires Ca(2+) as cofactor.

The protein localises to the cytoplasmic vesicle. Its subcellular location is the secretory vesicle. It localises to the synaptic vesicle membrane. It is found in the recycling endosome. The protein resides in the endoplasmic reticulum membrane. Functionally, calcium sensor which is essential for the stabilization of normal baseline neurotransmitter release and for the induction and long-term maintenance of presynaptic homeostatic plasticity. In Mus musculus (Mouse), this protein is Multiple C2 and transmembrane domain-containing protein 1.